A 451-amino-acid polypeptide reads, in one-letter code: MTVTTLGHPLAPVFAAAPLSPPTHRDIWWLIIVKTLGVFAFLVLATLFMIWAERRVVARMQQRIGPNRVGPFGLLQSLADGLKLALKEDIVPTLADKAVFILAPVISATPAFLAFAVIPFGPTVSIAGHHTNLQLTDLPVAVLFVLAMSSLGVYGIVLAGWSSGSPYPLLGGVRSAAQVVSYEIAMGLSFVGVFLYSGSLSTSDIVAAQAHRWGILWAGVSFAVYAIAMVGETNRAPFDLPEGETEIVGGFHTEYTSLKFALFYLAEYINMVTVSALMTTLFLGGWRAPWPLSLWSQANVGWWPVLWFLIKLGIVLFVFIWLRGTLPRFRYDQFMQFGWKVLIPVNLTWILVEAAIRVVNVSNWRVWVIPFAIFLALVAVGTYVADLVRQRSEVGDGGPILGPALVPNPDSPYPIPPLPGQRPLVGVLEARTDDFPVGSAAEPRNGGDGDA.

Helical transmembrane passes span 30–50, 98–118, 138–158, 176–196, 213–233, 262–282, 302–322, 336–356, and 368–388; these read LIIV…LFMI, AVFI…FAVI, LPVA…GIVL, AAQV…VFLY, WGIL…VGET, LFYL…TTLF, WWPV…FIWL, QFGW…EAAI, and VIPF…ADLV.

Belongs to the complex I subunit 1 family. In terms of assembly, NDH-1 is composed of 14 different subunits. Subunits NuoA, H, J, K, L, M, N constitute the membrane sector of the complex.

It is found in the cell membrane. The enzyme catalyses a quinone + NADH + 5 H(+)(in) = a quinol + NAD(+) + 4 H(+)(out). In terms of biological role, NDH-1 shuttles electrons from NADH, via FMN and iron-sulfur (Fe-S) centers, to quinones in the respiratory chain. The immediate electron acceptor for the enzyme in this species is believed to be ubiquinone. Couples the redox reaction to proton translocation (for every two electrons transferred, four hydrogen ions are translocated across the cytoplasmic membrane), and thus conserves the redox energy in a proton gradient. This subunit may bind ubiquinone. This Acidothermus cellulolyticus (strain ATCC 43068 / DSM 8971 / 11B) protein is NADH-quinone oxidoreductase subunit H.